Consider the following 280-residue polypeptide: tRNA pseudouridine synthase A (280 aa).

D60 acts as the Nucleophile in catalysis. Residue Y119 coordinates substrate.

It belongs to the tRNA pseudouridine synthase TruA family. In terms of assembly, homodimer.

The enzyme catalyses uridine(38/39/40) in tRNA = pseudouridine(38/39/40) in tRNA. Functionally, formation of pseudouridine at positions 38, 39 and 40 in the anticodon stem and loop of transfer RNAs. The protein is tRNA pseudouridine synthase A of Treponema pallidum (strain Nichols).